The primary structure comprises 170 residues: MALLTALDDTLPEEAQGPGRRMILLSTPSQSDALRACFERNLYPGIATKEELAQGIDIPEPRVQIWFQNERSCQLRQHRRQSRPWPGRRDPQKGRRKRTAITGSQTALLLRAFEKDRFPGIAAREELARETGLPESRIQIWFQNRRARHRGQSGRAPTQASIRCNAAPIG.

DNA-binding regions (homeobox) lie at residues 19–78 and 94–153; these read GRRM…LRQH and GRRK…RGQS. Residues 75-100 form a disordered region; sequence LRQHRRQSRPWPGRRDPQKGRRKRTA.

This sequence belongs to the paired homeobox family. Expressed in rhabdomyosarcoma TE671 cells as well as in several other normal and cancer cells.

The protein resides in the nucleus. Probable transcription activator. Binds the P5 DNA element sequence 5'-GATCTGAGTCTAATTGAGAATTACTGTAC-3'. In Homo sapiens (Human), this protein is Double homeobox protein 1 (DUX1).